The primary structure comprises 89 residues: Small ribosomal subunit protein uS15 (89 aa).

Belongs to the universal ribosomal protein uS15 family. In terms of assembly, part of the 30S ribosomal subunit. Forms a bridge to the 50S subunit in the 70S ribosome, contacting the 23S rRNA.

One of the primary rRNA binding proteins, it binds directly to 16S rRNA where it helps nucleate assembly of the platform of the 30S subunit by binding and bridging several RNA helices of the 16S rRNA. In terms of biological role, forms an intersubunit bridge (bridge B4) with the 23S rRNA of the 50S subunit in the ribosome. This Staphylococcus carnosus (strain TM300) protein is Small ribosomal subunit protein uS15.